The chain runs to 645 residues: UPF0313 protein CLB_0243 (645 aa).

Positions 295–566 constitute a Radical SAM core domain; that stretch reads AIKEVKFSIT…RMQRALLQFS (272 aa). Cys-309, Cys-313, and Cys-316 together coordinate [4Fe-4S] cluster. Positions 598–645 are disordered; the sequence is NKPYKKSHKKNNAKNNNNHYNKNNNYNKNKDISKKNKKNSLSKHKKRK. A compositionally biased stretch (basic residues) spans 600 to 609; it reads PYKKSHKKNN. Residues 610 to 624 are compositionally biased toward low complexity; that stretch reads AKNNNNHYNKNNNYN. A compositionally biased stretch (basic residues) spans 632 to 645; sequence KNKKNSLSKHKKRK.

Belongs to the UPF0313 family. [4Fe-4S] cluster serves as cofactor.

The protein is UPF0313 protein CLB_0243 of Clostridium botulinum (strain ATCC 19397 / Type A).